The sequence spans 506 residues: Probable alpha-L-arabinofuranosidase B (506 aa).

A signal peptide spans 1–26 (MLPQLSIERASVFALGLIATGSLVVA). The interval 27-343 (GPCDIYSAGG…ANIVAAKYAT (317 aa)) is catalytic. 3 disulfide bridges follow: Cys-29-Cys-39, Cys-89-Cys-94, and Cys-184-Cys-185. Asp-227 is a binding site for substrate. The active-site Nucleophile is Glu-229. Asn-230 contributes to the substrate binding site. The N-linked (GlcNAc...) asparagine glycan is linked to Asn-240. Gly-304 is a binding site for substrate. The Proton donor role is filled by Asp-305. The interval 344–506 (ASLTSGPKLT…VSWVISTGFA (163 aa)) is ABD. A disulfide bond links Cys-409 and Cys-447. Substrate contacts are provided by His-424, Asn-426, Phe-427, Asp-443, His-471, Leu-476, and Asp-496.

The protein belongs to the glycosyl hydrolase 54 family.

The protein resides in the secreted. It carries out the reaction Hydrolysis of terminal non-reducing alpha-L-arabinofuranoside residues in alpha-L-arabinosides.. The protein operates within glycan metabolism; L-arabinan degradation. Its function is as follows. Alpha-L-arabinofuranosidase involved in the degradation of arabinoxylan, a major component of plant hemicellulose. Able to hydrolyze 1,5-, 1,3- and 1,2-alpha-linkages not only in L-arabinofuranosyl oligosaccharides, but also in polysaccharides containing terminal non-reducing L-arabinofuranoses in side chains, like L-arabinan, arabinogalactan and arabinoxylan. The sequence is that of Probable alpha-L-arabinofuranosidase B (abfB) from Aspergillus fumigatus (strain ATCC MYA-4609 / CBS 101355 / FGSC A1100 / Af293) (Neosartorya fumigata).